The primary structure comprises 494 residues: BTB/POZ domain and ankyrin repeat-containing protein NH5.2 (494 aa).

Positions 25 to 131 (SDVAFSVEGR…LYSGQASVAA (107 aa)) constitute a BTB domain. The segment at 60-95 (NHQPPPPPPPPLNWPTAGGGGGGSGGGGRGGAGGGG) is disordered. Residues 61-72 (HQPPPPPPPPLN) are compositionally biased toward pro residues. Residues 76–95 (AGGGGGGSGGGGRGGAGGGG) show a composition bias toward gly residues. The C2HC NPR-type zinc finger occupies 137-151 (LPGCGARGCWHTRCG). Zn(2+)-binding residues include C140, C145, H147, and C150. ANK repeat units follow at residues 275–303 (NKIR…GLDL), 304–334 (DDAL…DVNS), 339–368 (TGKT…DPNS), and 372–406 (DGVT…KLRL). 2 disordered regions span residues 421–443 (DDGA…PRSD) and 471–494 (GEGR…NGFA).

This sequence belongs to the plant 'ANKYRIN-BTB/POZ' family. 'NOOT-BOP-COCH-like' (NBCL) subfamily. Homodimer. Interacts with TGAL5, TGAL7, TGAL8 and TGAL9.

The protein localises to the nucleus. Its subcellular location is the cytoplasm. It participates in protein modification; protein ubiquitination. May act as a substrate-specific adapter of an E3 ubiquitin-protein ligase complex (CUL3-RBX1-BTB) which mediates the ubiquitination and subsequent proteasomal degradation of target proteins. Transcriptional co-regulator involved in the promotion of leaf and floral meristem fate and determinacy. Required for the abscission of senescent organs, probably by regulating the cell wall disorganization in abscission zones (AZs, e.g. pulvini at the base of leaves). The polypeptide is BTB/POZ domain and ankyrin repeat-containing protein NH5.2 (Oryza sativa subsp. japonica (Rice)).